The primary structure comprises 405 residues: L-rhamnonate dehydratase (405 aa).

Substrate-binding residues include His33 and Arg59. Positions 226, 252, and 280 each coordinate Mg(2+). His329 functions as the Proton acceptor in the catalytic mechanism. A substrate-binding site is contributed by Glu349.

Belongs to the mandelate racemase/muconate lactonizing enzyme family. RhamD subfamily. Homooctamer; tetramer of dimers. The cofactor is Mg(2+).

The catalysed reaction is L-rhamnonate = 2-dehydro-3-deoxy-L-rhamnonate + H2O. In terms of biological role, catalyzes the dehydration of L-rhamnonate to 2-keto-3-deoxy-L-rhamnonate (KDR). In Escherichia coli O81 (strain ED1a), this protein is L-rhamnonate dehydratase.